The following is a 185-amino-acid chain: UPF0301 protein HCH_00550 (185 aa).

This sequence belongs to the UPF0301 (AlgH) family.

This is UPF0301 protein HCH_00550 from Hahella chejuensis (strain KCTC 2396).